We begin with the raw amino-acid sequence, 236 residues long: 2,3,4,5-tetrahydropyridine-2,6-dicarboxylate N-acetyltransferase (236 aa).

It belongs to the transferase hexapeptide repeat family. DapH subfamily.

It catalyses the reaction (S)-2,3,4,5-tetrahydrodipicolinate + acetyl-CoA + H2O = L-2-acetamido-6-oxoheptanedioate + CoA. The protein operates within amino-acid biosynthesis; L-lysine biosynthesis via DAP pathway; LL-2,6-diaminopimelate from (S)-tetrahydrodipicolinate (acetylase route): step 1/3. Functionally, catalyzes the transfer of an acetyl group from acetyl-CoA to tetrahydrodipicolinate. The chain is 2,3,4,5-tetrahydropyridine-2,6-dicarboxylate N-acetyltransferase from Clostridium beijerinckii (strain ATCC 51743 / NCIMB 8052) (Clostridium acetobutylicum).